Reading from the N-terminus, the 400-residue chain is Probable glycosyltransferase WbjE (400 aa).

It belongs to the glycosyltransferase group 1 family. Glycosyltransferase 4 subfamily.

The protein operates within bacterial outer membrane biogenesis; LPS O-antigen biosynthesis. This is Probable glycosyltransferase WbjE (wbjE) from Pseudomonas aeruginosa.